A 1191-amino-acid polypeptide reads, in one-letter code: Major DNA-binding protein (1191 aa).

The short motif at 820-821 is the Required for filament formation element; the sequence is FW. 2 disordered regions span residues 1122-1146 and 1168-1191; these read TAAG…AADE and AGLI…RSRL. A compositionally biased stretch (gly residues) spans 1127–1142; it reads AAGGGGSATEGGGGGA. The interval 1173–1191 is required for nuclear localization; that stretch reads GDDVRGDDEFELPSKRSRL.

Belongs to the herpesviridae major DNA-binding protein family. As to quaternary structure, homooligomers. Forms double-helical filaments necessary for the formation of replication compartments within the host nucleus. Interacts with the origin-binding protein. Interacts with the helicase primase complex; this interaction stimulates primer synthesis activity of the helicase-primase complex. Interacts with the DNA polymerase. Interacts with the alkaline exonuclease; this interaction increases its nuclease processivity.

The protein localises to the host nucleus. Its function is as follows. Single-stranded DNA-binding protein required for DNA replication. Functionally, plays several crucial roles in viral infection. Participates in the opening of the viral DNA origin to initiate replication by interacting with the origin-binding protein. May disrupt loops, hairpins and other secondary structures present on ssDNA to reduce and eliminate pausing of viral DNA polymerase at specific sites during elongation. Promotes viral DNA recombination by performing strand-transfer, characterized by the ability to transfer a DNA strand from a linear duplex to a complementary single-stranded DNA circle. Can also catalyze the renaturation of complementary single strands. Additionally, reorganizes the host cell nucleus, leading to the formation of prereplicative sites and replication compartments. This process is driven by the protein which can form double-helical filaments in the absence of DNA. The polypeptide is Major DNA-binding protein (Mus musculus (Mouse)).